We begin with the raw amino-acid sequence, 106 residues long: MTGERYAFRMKLNPGMEAEYRRRHDEIWPELVDLLHETGVSDYAIYLDEETSTLFGVLTRKPNHGMAALPDHPVMKKWWAHMADIMATNADNSPVSVDLKPVFHMP.

A substrate-binding site is contributed by Tyr-20. His-24 serves as the catalytic Proton donor. Substrate is bound by residues Tyr-43 and 78–79 (WW).

The protein belongs to the rhamnose mutarotase family. As to quaternary structure, homodimer.

The protein resides in the cytoplasm. The catalysed reaction is alpha-L-rhamnose = beta-L-rhamnose. Its pathway is carbohydrate metabolism; L-rhamnose metabolism. In terms of biological role, involved in the anomeric conversion of L-rhamnose. The chain is L-rhamnose mutarotase from Brucella anthropi (strain ATCC 49188 / DSM 6882 / CCUG 24695 / JCM 21032 / LMG 3331 / NBRC 15819 / NCTC 12168 / Alc 37) (Ochrobactrum anthropi).